Here is a 679-residue protein sequence, read N- to C-terminus: tRNA uridine 5-carboxymethylaminomethyl modification enzyme MnmG (679 aa).

Position 13–18 (13–18 (GGGHAG)) interacts with FAD. 280–294 (GPRYCPSVEDKINRF) provides a ligand contact to NAD(+).

Belongs to the MnmG family. Homodimer. Heterotetramer of two MnmE and two MnmG subunits. The cofactor is FAD.

It localises to the cytoplasm. Its function is as follows. NAD-binding protein involved in the addition of a carboxymethylaminomethyl (cmnm) group at the wobble position (U34) of certain tRNAs, forming tRNA-cmnm(5)s(2)U34. The chain is tRNA uridine 5-carboxymethylaminomethyl modification enzyme MnmG from Albidiferax ferrireducens (strain ATCC BAA-621 / DSM 15236 / T118) (Rhodoferax ferrireducens).